A 449-amino-acid chain; its full sequence is Probable protoheme IX farnesyltransferase, mitochondrial (449 aa).

Low complexity predominate over residues 99 to 138; sequence TTSTTTTTNINENNIKNENNNENNNENSNNNNEQSIKSNQ. A disordered region spans residues 99–140; the sequence is TTSTTTTTNINENNIKNENNNENNNENSNNNNEQSIKSNQTK. A run of 7 helical transmembrane segments spans residues 163-183, 245-267, 279-299, 303-323, 352-372, 374-394, and 402-422; these read LTAIAGYVAACPIGAFDWVVL, MAVTPSLFVPGTLAACNVILYCW, TWIGAFVGAIPPLIGSVAATG, AIGMLLATFMYIWQIPHFLAL, SLAHALFGIPLPFIFDYFFNF, VHPITLTCMALSSASLALPFI, and LYIISLISLPITLFLSCLLRQ.

The protein belongs to the UbiA prenyltransferase family.

It localises to the mitochondrion membrane. Functionally, converts protoheme IX and farnesyl diphosphate to heme O. The sequence is that of Probable protoheme IX farnesyltransferase, mitochondrial (cox10) from Dictyostelium discoideum (Social amoeba).